A 425-amino-acid polypeptide reads, in one-letter code: Probable aminotransferase tcpI (425 aa).

Lys256 carries the post-translational modification N6-(pyridoxal phosphate)lysine.

This sequence belongs to the class-I pyridoxal-phosphate-dependent aminotransferase family. Pyridoxal 5'-phosphate is required as a cofactor.

Its pathway is secondary metabolite biosynthesis. Its function is as follows. Probable aminotransferase; part of the gene cluster that mediates the biosynthesis of an unusual class of epipolythiodioxopiperazines (ETPs) lacking the reactive thiol group important for toxicity. Firstly, L-tyrosine is prenylated by tcpD, before undergoing condensation with L-glycine in a reaction catalyzed by the NRPS tcpP leading to the diketopiperazine (DKP) backbone. Afterwards the alpha-carbon of tyrosine is oxidized by the cytochrome P450 tcpC to form a hydroxyl group. However, in contrast other ETP biosynthesis pathways studied so far, tcpC is not able to bishydroxylate the DKP at both alpha-carbon positions, but hydroxylates the alpha-carbon of the tyrosine part and the nitrogen of the glycine part. The next steps involve an alpha,beta-elimination reaction catalyzed by tcpI, a methylation by the methyltransferase tcpN the action of the four enzyme cascade tcpG/K/J/I. Due to a dysfunctional cytochrome P450 monooxygenase tcpC, the pathway leads to the biosynthesis of probable non-toxic metabolites lacking the reactive thiol group. The sequence is that of Probable aminotransferase tcpI from Claviceps purpurea (strain 20.1) (Ergot fungus).